The following is a 191-amino-acid chain: Lipid A acyltransferase PagP (191 aa).

The signal sequence occupies residues 1-23; sequence MRLFYQRISLLISLCGFFSAAWA. Catalysis depends on residues His62, Asp105, and Ser106.

Belongs to the lipid A palmitoyltransferase family. Homodimer.

The protein resides in the cell outer membrane. The catalysed reaction is a lipid A + a 1,2-diacyl-sn-glycero-3-phosphocholine = a hepta-acyl lipid A + a 2-acyl-sn-glycero-3-phosphocholine. It carries out the reaction a lipid IVA + a 1,2-diacyl-sn-glycero-3-phosphocholine = a lipid IVB + a 2-acyl-sn-glycero-3-phosphocholine. The enzyme catalyses a lipid IIA + a 1,2-diacyl-sn-glycero-3-phosphocholine = a lipid IIB + a 2-acyl-sn-glycero-3-phosphocholine. In terms of biological role, transfers a fatty acid residue from the sn-1 position of a phospholipid to the N-linked hydroxyfatty acid chain on the proximal unit of lipid A or its precursors. This is Lipid A acyltransferase PagP from Sodalis glossinidius (strain morsitans).